Reading from the N-terminus, the 571-residue chain is MDLHQLLKYRLTGANVVYEIPTENNLQNSPWQANPLKYEFSDSPYTPLSSQFECDNLSALTNTPDNQSSTETISAQPISPLEADSSYRQAGILLQENIQVGADPLYATSRHNMQHALREIETVLMAPDTDDATTSTKHEFEEIKPAQLVRQRSRTWSHESRQPLPGVGRSQFASGGYPTASYEFRPEKRQRELREDPQIIVKQLLTRCAEALSEDRTEEFHKLVQEARGVVSINGEPIQRLGAYLLEGLVARHGNSGTNIYRALKCREPESKELLSYMRILYNICPYFKFGYMAANGAIAEALRTENNIHIIDFQIAQGTQWITLIQALAARPGGPPRVRITGIDDPVSEYARGEGLDIVGKMLKSMSEEFKIPLEFTPLSVYATQVTKEMLEIRPGEALSVNFTLQLHHTPDESVDVNNPRDGLLRMVKGLSPKVTTLVEQESHTNTTPFLMRFGETMEYYSAMFESIDANLPRDNKERISVEQHCLAKDIVNIIACEGKDRVERHELLGKWKSRLTMAGFRPYPLSSYVNSVIRKLLACYSDKYTLDEKDGAMLLGWRSRKLISASAWH.

Over residues Thr-61 to Pro-77 the composition is skewed to polar residues. Disordered stretches follow at residues Thr-61–Pro-80 and Gln-151–Ala-180. The 380-residue stretch at Glu-192 to His-571 folds into the GRAS domain. Positions Ile-199–Asn-259 are leucine repeat I (LRI). The interval Met-278 to Gly-343 is VHIID. Positions Ile-309–Asp-313 match the VHIID motif. Positions Ile-359–Met-391 are leucine repeat II (LRII). The interval Leu-400–Asn-494 is PFYRE. An SAW region spans residues Ala-497–His-571.

Belongs to the GRAS family.

The protein localises to the nucleus. May play a regulatory role in the early step of oligosaccharide elicitor response, downstream of the membrane-associated high-affinity chitin-binding protein. The sequence is that of Chitin-inducible gibberellin-responsive protein 1 (CIGR1) from Oryza sativa subsp. japonica (Rice).